Consider the following 337-residue polypeptide: MLEKFERYPLTFGATAIEYLPRLTEALGGDVEIWAKREDCNSGLAMGGNKLRKLEYIVPDAIASNADTLVSIGGVQSNHTRMVAAVAAKLGMKCRLVQESWVPHEDAVYDRVGNILMTRLMGADSRIVDDGFDIGIRQSWEDAIQSVIDEGGKPYAIPAGASVHKYGGLGYVAFAEEVARQEADLGFKFDYIIVCVVTGSTQAGMIVGFAAQDRADRVIGIDASGTPEQTRSQVRQIVDNTAELVELGRPVREDEIVILNDYAYPAYGVPSNETNEAIRLAARTEAMITDPVYEGKSMQGMIDLTRKGFFPKGSKVLYAHLGGAPALNGYSYTYRNG.

N6-(pyridoxal phosphate)lysine is present on K50. S77 serves as the catalytic Nucleophile.

Belongs to the ACC deaminase/D-cysteine desulfhydrase family. In terms of assembly, homotrimer. Requires pyridoxal 5'-phosphate as cofactor.

It catalyses the reaction 1-aminocyclopropane-1-carboxylate + H2O = 2-oxobutanoate + NH4(+). Functionally, catalyzes a cyclopropane ring-opening reaction, the irreversible conversion of 1-aminocyclopropane-1-carboxylate (ACC) to ammonia and alpha-ketobutyrate. Allows growth on ACC as a nitrogen source. This chain is 1-aminocyclopropane-1-carboxylate deaminase, found in Rhizobium radiobacter (Agrobacterium tumefaciens).